The following is a 151-amino-acid chain: MTKYISALGLDVGRKRVGVAGCDRTGLIATGITTVERTSFDRDVQQIQNIVNERQVQVLVVGLPYSMDGSLGFQARQVQKFTSRLAKALQLPVEYVDERLTSFQAEQMLIAENVSPSRNKGLIDRKAAALILQQWLDIRRTNAQSSVAVEY.

The protein belongs to the YqgF nuclease family.

The protein resides in the cytoplasm. In terms of biological role, could be a nuclease involved in processing of the 5'-end of pre-16S rRNA. The sequence is that of Putative pre-16S rRNA nuclease from Nostoc sp. (strain PCC 7120 / SAG 25.82 / UTEX 2576).